Here is a 351-residue protein sequence, read N- to C-terminus: MLKTSEKIFSETPSIITKEEGLKILNGVIPLTTCLDKAFQERNRYFENKVRIHILDNIKNGYCPEDCGYCAQRKNANSGVQEYPMKSEQEIYEDAVQAKKNGAYRFCMVTSGTGPNRLTTEKLASTIQRITDELNMKVCLSAGLLDIEKAQVLKEAGLDRYNHNLNTSENHYSEICDTHTYLQRTQTLDSVSKAGIGMCSGVIVGMGESFQDIVDVAFQLKSFRVISIPVNFFIPVKGHTIKNPSVLTPELCVRILCMFRLINPDSEIRIAAGREGHLRSLSATALFAANSLFSSGYLNVKGSEILETVAMIRDAGFVPELSNGEILPENFGTESFYSEKNFPELYKFKKF.

A Radical SAM core domain is found at 48–265 (NKVRIHILDN…LCMFRLINPD (218 aa)). Cys-63, Cys-67, and Cys-70 together coordinate [4Fe-4S] cluster. Residues Cys-107, Cys-139, Cys-199, and Arg-269 each contribute to the [2Fe-2S] cluster site.

This sequence belongs to the radical SAM superfamily. Biotin synthase family. Homodimer. [4Fe-4S] cluster is required as a cofactor. [2Fe-2S] cluster serves as cofactor.

It carries out the reaction (4R,5S)-dethiobiotin + (sulfur carrier)-SH + 2 reduced [2Fe-2S]-[ferredoxin] + 2 S-adenosyl-L-methionine = (sulfur carrier)-H + biotin + 2 5'-deoxyadenosine + 2 L-methionine + 2 oxidized [2Fe-2S]-[ferredoxin]. The protein operates within cofactor biosynthesis; biotin biosynthesis; biotin from 7,8-diaminononanoate: step 2/2. Its function is as follows. Catalyzes the conversion of dethiobiotin (DTB) to biotin by the insertion of a sulfur atom into dethiobiotin via a radical-based mechanism. In Leptospira interrogans serogroup Icterohaemorrhagiae serovar Lai (strain 56601), this protein is Biotin synthase.